The sequence spans 419 residues: Lipid II:glycine glycyltransferase (419 aa).

The protein belongs to the FemABX family.

The protein localises to the cytoplasm. It carries out the reaction beta-D-GlcNAc-(1-&gt;4)-Mur2Ac(oyl-L-Ala-D-isoglutaminyl-L-Lys-D-Ala-D-Ala)-di-trans,octa-cis-undecaprenyl diphosphate + glycyl-tRNA(Gly) = beta-D-GlcNAc-(1-&gt;4)-Mur2Ac(oyl-L-Ala-D-isoglutaminyl-L-Lys-(N(6)-Gly)-D-Ala-D-Ala)-di-trans,octa-cis-undecaprenyl diphosphate + tRNA(Gly) + H(+). Functionally, catalyzes the incorporation of amino acid(s) into the interchain peptide bridge of peptidoglycan, using aminoacyl-tRNA as amino acid donor. This chain is Lipid II:glycine glycyltransferase (femX), found in Staphylococcus haemolyticus (strain JCSC1435).